Consider the following 380-residue polypeptide: Putative glutamate--cysteine ligase 2-2 (380 aa).

The protein belongs to the glutamate--cysteine ligase type 2 family. YbdK subfamily.

The catalysed reaction is L-cysteine + L-glutamate + ATP = gamma-L-glutamyl-L-cysteine + ADP + phosphate + H(+). ATP-dependent carboxylate-amine ligase which exhibits weak glutamate--cysteine ligase activity. The chain is Putative glutamate--cysteine ligase 2-2 from Nocardia farcinica (strain IFM 10152).